Here is an 82-residue protein sequence, read N- to C-terminus: Small ribosomal subunit protein bS16 (82 aa).

This sequence belongs to the bacterial ribosomal protein bS16 family.

In Shigella boydii serotype 18 (strain CDC 3083-94 / BS512), this protein is Small ribosomal subunit protein bS16.